The chain runs to 450 residues: Phosphoglucosamine mutase (450 aa).

S101 acts as the Phosphoserine intermediate in catalysis. Mg(2+) contacts are provided by S101, D240, D242, and D244. S101 carries the post-translational modification Phosphoserine.

It belongs to the phosphohexose mutase family. It depends on Mg(2+) as a cofactor. Activated by phosphorylation.

It carries out the reaction alpha-D-glucosamine 1-phosphate = D-glucosamine 6-phosphate. Catalyzes the conversion of glucosamine-6-phosphate to glucosamine-1-phosphate. The protein is Phosphoglucosamine mutase of Streptococcus equi subsp. zooepidemicus (strain MGCS10565).